Consider the following 43-residue polypeptide: Photosystem I reaction center subunit IX (43 aa).

A helical membrane pass occupies residues 7-27 (YLSTAPVLSTIWFGSLAGLLI).

Belongs to the PsaJ family.

The protein resides in the plastid. The protein localises to the chloroplast thylakoid membrane. Functionally, may help in the organization of the PsaE and PsaF subunits. In Vitis vinifera (Grape), this protein is Photosystem I reaction center subunit IX.